Reading from the N-terminus, the 412-residue chain is Membrane fusion protein MtrC (412 aa).

Residues 1–24 form the signal peptide; the sequence is MAFYASKAMRAAALAAAVALALSS. Cys25 carries N-palmitoyl cysteine lipidation. Cys25 is lipidated: S-diacylglycerol cysteine. Positions 377–412 are disordered; that stretch reads AKKVTPKEWAPSENQAAAPQAGVQTASEAKPASEAK. Residues 388–403 are compositionally biased toward polar residues; sequence SENQAAAPQAGVQTAS.

Belongs to the membrane fusion protein (MFP) (TC 8.A.1) family.

The protein localises to the cell inner membrane. Cell membrane lipoprotein, involved in cell membrane permeability to hydrophobic compounds such as antibiotics, dyes and detergents. This Neisseria gonorrhoeae protein is Membrane fusion protein MtrC (mtrC).